A 343-amino-acid polypeptide reads, in one-letter code: S-adenosylmethionine:tRNA ribosyltransferase-isomerase (343 aa).

This sequence belongs to the QueA family. In terms of assembly, monomer.

It localises to the cytoplasm. It carries out the reaction 7-aminomethyl-7-carbaguanosine(34) in tRNA + S-adenosyl-L-methionine = epoxyqueuosine(34) in tRNA + adenine + L-methionine + 2 H(+). Its pathway is tRNA modification; tRNA-queuosine biosynthesis. Its function is as follows. Transfers and isomerizes the ribose moiety from AdoMet to the 7-aminomethyl group of 7-deazaguanine (preQ1-tRNA) to give epoxyqueuosine (oQ-tRNA). The polypeptide is S-adenosylmethionine:tRNA ribosyltransferase-isomerase (Geobacter metallireducens (strain ATCC 53774 / DSM 7210 / GS-15)).